A 74-amino-acid polypeptide reads, in one-letter code: ATP synthase subunit 9, mitochondrial (74 aa).

A run of 2 helical transmembrane segments spans residues 12 to 32 (LATI…AALI) and 50 to 70 (ILGF…AFLL).

The protein belongs to the ATPase C chain family. As to quaternary structure, F-type ATPases have 2 components, CF(1) - the catalytic core - and CF(0) - the membrane proton channel. CF(1) has five subunits: alpha(3), beta(3), gamma(1), delta(1), epsilon(1). CF(0) has three main subunits: a, b and c.

The protein localises to the mitochondrion membrane. In terms of biological role, mitochondrial membrane ATP synthase (F(1)F(0) ATP synthase or Complex V) produces ATP from ADP in the presence of a proton gradient across the membrane which is generated by electron transport complexes of the respiratory chain. F-type ATPases consist of two structural domains, F(1) - containing the extramembraneous catalytic core and F(0) - containing the membrane proton channel, linked together by a central stalk and a peripheral stalk. During catalysis, ATP synthesis in the catalytic domain of F(1) is coupled via a rotary mechanism of the central stalk subunits to proton translocation. Part of the complex F(0) domain. A homomeric c-ring of probably 10 subunits is part of the complex rotary element. The polypeptide is ATP synthase subunit 9, mitochondrial (Rhizopus oryzae (Mucormycosis agent)).